We begin with the raw amino-acid sequence, 120 residues long: Ribosomal protein eL22-like 1 (120 aa).

This sequence belongs to the eukaryotic ribosomal protein eL22 family.

This is Ribosomal protein eL22-like 1 (rpl22l1) from Xenopus tropicalis (Western clawed frog).